We begin with the raw amino-acid sequence, 697 residues long: MTELSKYRNIGIFAHVDAGKTTTTERILKLTGKIHKIGEVHDGESTTDFMVQEAERGITIQSAAVSCFWKDHRFNVIDTPGHVDFTVEVYRSLKVLDGGIAVFCGSGGVEPQSETNWRYANESEVARIIFVNKLDRMGADFLRVVKQTKDVLAANPLVMVLPIGIEDEFCGVVDLLTRKAYVWDDSGIPENFEVKDVPANMVDLVEEYREMLIETAVEQDDDLLEAYMEGEEPSIEDLKRCIRKGTRTMAFFPTFCGSAFKNKGMQLVLDAVVDYLPAPDEVDPQPLTDEEGNETGEYAIVSADESLKALAFKIMDDRFGALTFVRIYAGRLKKGDTILNSATGKTERIGRMCEMYANDRIEIESAEAGDIIAIVGMKNVQTGHTLCDVKHPCTLEAMVFPEPVISIAVAPKDKGGSEKMAIAIGKMIAEDPSFRVETDEDSGETILKGMGELHLDIKVDILKRTYGVELIVGEPQVAYRETITAMVEDQYTHKKQSGGSGQFGKIEYIIRPGEPNSGFVFKSSVVGGSVPKEFWPAVEKGFASMMNTGTIAGFPVLDVEFELTDGAYHAVDSSAIAFEIAAKAAFRQSIAKAKPQLLEPIMKVDVFSPDDNVGDVIGDLNRRRGMIKDQVAGITGVRVKADVPLSEMFGYIGSLRTMTSGRGQFSMEFSHYSPCPNSVADKVVEQVKERKAAEAKK.

Positions 5–280 constitute a tr-type G domain; it reads SKYRNIGIFA…AVVDYLPAPD (276 aa). GTP is bound by residues 14–21, 78–82, and 132–135; these read AHVDAGKT, DTPGH, and NKLD.

Belongs to the TRAFAC class translation factor GTPase superfamily. Classic translation factor GTPase family. EF-G/EF-2 subfamily.

The protein resides in the cytoplasm. Functionally, catalyzes the GTP-dependent ribosomal translocation step during translation elongation. During this step, the ribosome changes from the pre-translocational (PRE) to the post-translocational (POST) state as the newly formed A-site-bound peptidyl-tRNA and P-site-bound deacylated tRNA move to the P and E sites, respectively. Catalyzes the coordinated movement of the two tRNA molecules, the mRNA and conformational changes in the ribosome. This is Elongation factor G 2 (fusB) from Shewanella oneidensis (strain ATCC 700550 / JCM 31522 / CIP 106686 / LMG 19005 / NCIMB 14063 / MR-1).